The primary structure comprises 1054 residues: Kinesin-like protein KIN-7G (1054 aa).

One can recognise a Kinesin motor domain in the interval 17 to 341 (KIFVSVRLRP…LLFASCAKEV (325 aa)). ATP is bound at residue 105–112 (GQTSSGKT). 2 coiled-coil regions span residues 350–425 (VMSD…IGEA) and 611–640 (TETA…VSSV). 2 disordered regions span residues 600–648 (CEPE…KEKS) and 740–760 (ERAE…PKHI). Positions 613–631 (TAEEKEEKEETEEKEEEEE) are enriched in acidic residues.

The protein belongs to the TRAFAC class myosin-kinesin ATPase superfamily. Kinesin family. KIN-7 subfamily.

The sequence is that of Kinesin-like protein KIN-7G from Arabidopsis thaliana (Mouse-ear cress).